Reading from the N-terminus, the 251-residue chain is uncharacterized protein (251 aa).

This is an uncharacterized protein from Caenorhabditis elegans.